The sequence spans 636 residues: 1-deoxy-D-xylulose-5-phosphate synthase (636 aa).

Thiamine diphosphate contacts are provided by residues His74 and 115 to 117; that span reads GHA. Residue Asp146 coordinates Mg(2+). Thiamine diphosphate-binding positions include 147 to 148, Asn175, Tyr285, and Glu368; that span reads GA. Residue Asn175 participates in Mg(2+) binding.

This sequence belongs to the transketolase family. DXPS subfamily. As to quaternary structure, homodimer. Mg(2+) is required as a cofactor. It depends on thiamine diphosphate as a cofactor.

It catalyses the reaction D-glyceraldehyde 3-phosphate + pyruvate + H(+) = 1-deoxy-D-xylulose 5-phosphate + CO2. The protein operates within metabolic intermediate biosynthesis; 1-deoxy-D-xylulose 5-phosphate biosynthesis; 1-deoxy-D-xylulose 5-phosphate from D-glyceraldehyde 3-phosphate and pyruvate: step 1/1. Functionally, catalyzes the acyloin condensation reaction between C atoms 2 and 3 of pyruvate and glyceraldehyde 3-phosphate to yield 1-deoxy-D-xylulose-5-phosphate (DXP). The polypeptide is 1-deoxy-D-xylulose-5-phosphate synthase (Anaeromyxobacter dehalogenans (strain 2CP-C)).